The sequence spans 1343 residues: DNA-directed RNA polymerase subunit beta (1343 aa).

It belongs to the RNA polymerase beta chain family. In terms of assembly, the RNAP catalytic core consists of 2 alpha, 1 beta, 1 beta' and 1 omega subunit. When a sigma factor is associated with the core the holoenzyme is formed, which can initiate transcription.

The catalysed reaction is RNA(n) + a ribonucleoside 5'-triphosphate = RNA(n+1) + diphosphate. DNA-dependent RNA polymerase catalyzes the transcription of DNA into RNA using the four ribonucleoside triphosphates as substrates. The protein is DNA-directed RNA polymerase subunit beta of Shewanella frigidimarina (strain NCIMB 400).